Reading from the N-terminus, the 396-residue chain is Subtelomeric hrmA-associated cluster protein AFUB_079040 (396 aa).

Disordered regions lie at residues 1 to 32 (MANK…QQSL) and 347 to 396 (YPEN…ECGR). Over residues 23-32 (SHASGSQQSL) the composition is skewed to polar residues. A compositionally biased stretch (basic residues) spans 367–380 (SKKKKDKKKKKSNK).

In terms of biological role, part of the subtelomeric hrmA-associated cluster (HAC) containing genes that alter the hyphal surface (such as reduced total chitin or increased beta-glucan exposure) and perturb inter-hyphal interactions within the developing biofilms, resulting in a loss of vertically aligned polarized growing filaments. Consequently, this hypoxia-typic morphotype (called H-MORPH) with altered biofilm architecture leads to increased hypoxia fitness, increased host inflammation, rapid disease progression, and mortality in a murine model of invasive aspergillosis. In Aspergillus fumigatus (strain CBS 144.89 / FGSC A1163 / CEA10) (Neosartorya fumigata), this protein is Subtelomeric hrmA-associated cluster protein AFUB_079040.